The chain runs to 118 residues: MKFQPLGERVLVERLEEENKTSSGIIIPDNAKEKPLMGVVKAVSHKISEGCKCVKEGDVIAFGKYKGAEIVLDGVEYMVLELEDILGIVGSGSCCHTGNHDHKHAKEHEACCHDHKKH.

The protein belongs to the GroES chaperonin family. In terms of assembly, heptamer of 7 subunits arranged in a ring. Interacts with the chaperonin GroEL.

It is found in the cytoplasm. Together with the chaperonin GroEL, plays an essential role in assisting protein folding. The GroEL-GroES system forms a nano-cage that allows encapsulation of the non-native substrate proteins and provides a physical environment optimized to promote and accelerate protein folding. GroES binds to the apical surface of the GroEL ring, thereby capping the opening of the GroEL channel. In Helicobacter pylori (strain G27), this protein is Co-chaperonin GroES.